The following is a 331-amino-acid chain: MDDRMVDQALHSEETSFELSLRPTMLKQYIGQSSIKNNLEVFIKAAKLREEPLDHVLLFGPPGLGKTTLSNIIANEMNVNIRTVSGPSLDRPGDLAAILSGLQPGDVLFIDEIHRLSSTVEEVLYSAMEDFFIDIIIGKGDEARSIRIDLPPFTLVGATTRAGSLTGPLRDRFGVHLRLEYYNENDLKEIIIRTAEVLNTKIDDESATELAKRSRGTPRVANRLLKRVRDFQQVNEDEQIYIETTKQALQLLQVDAEGLDYIDHKMMRCIINQYDGGPVGLDTIAVSIGEERITIEDVYEPFLIQKGFIERTPRGRKATAFAYEHFKNFNK.

Residues Met1 to Tyr182 form a large ATPase domain (RuvB-L) region. Residues Leu21, Arg22, Gly63, Lys66, Thr67, Thr68, Glu129–Phe131, Arg172, Tyr182, and Arg219 each bind ATP. Thr67 contributes to the Mg(2+) binding site. The interval Asn183–Gln253 is small ATPAse domain (RuvB-S). The interval Ala256–Lys331 is head domain (RuvB-H). DNA contacts are provided by Arg292, Arg311, and Arg316.

It belongs to the RuvB family. Homohexamer. Forms an RuvA(8)-RuvB(12)-Holliday junction (HJ) complex. HJ DNA is sandwiched between 2 RuvA tetramers; dsDNA enters through RuvA and exits via RuvB. An RuvB hexamer assembles on each DNA strand where it exits the tetramer. Each RuvB hexamer is contacted by two RuvA subunits (via domain III) on 2 adjacent RuvB subunits; this complex drives branch migration. In the full resolvosome a probable DNA-RuvA(4)-RuvB(12)-RuvC(2) complex forms which resolves the HJ.

It is found in the cytoplasm. The enzyme catalyses ATP + H2O = ADP + phosphate + H(+). Functionally, the RuvA-RuvB-RuvC complex processes Holliday junction (HJ) DNA during genetic recombination and DNA repair, while the RuvA-RuvB complex plays an important role in the rescue of blocked DNA replication forks via replication fork reversal (RFR). RuvA specifically binds to HJ cruciform DNA, conferring on it an open structure. The RuvB hexamer acts as an ATP-dependent pump, pulling dsDNA into and through the RuvAB complex. RuvB forms 2 homohexamers on either side of HJ DNA bound by 1 or 2 RuvA tetramers; 4 subunits per hexamer contact DNA at a time. Coordinated motions by a converter formed by DNA-disengaged RuvB subunits stimulates ATP hydrolysis and nucleotide exchange. Immobilization of the converter enables RuvB to convert the ATP-contained energy into a lever motion, pulling 2 nucleotides of DNA out of the RuvA tetramer per ATP hydrolyzed, thus driving DNA branch migration. The RuvB motors rotate together with the DNA substrate, which together with the progressing nucleotide cycle form the mechanistic basis for DNA recombination by continuous HJ branch migration. Branch migration allows RuvC to scan DNA until it finds its consensus sequence, where it cleaves and resolves cruciform DNA. The sequence is that of Holliday junction branch migration complex subunit RuvB from Staphylococcus haemolyticus (strain JCSC1435).